The chain runs to 424 residues: Probable methyltransferase EP424R (424 aa).

The Adrift-type SAM-dependent 2'-O-MTase domain maps to 103 to 315; that stretch reads QIVTNAWLKM…TYIVGKNRLR (213 aa). Residues glycine 135 and aspartate 228 each coordinate S-adenosyl-L-methionine. Residue lysine 268 is the Proton acceptor of the active site.

The protein localises to the virion. This Ornithodoros (relapsing fever ticks) protein is Probable methyltransferase EP424R.